We begin with the raw amino-acid sequence, 595 residues long: DNA mismatch repair protein MutL (595 aa).

This sequence belongs to the DNA mismatch repair MutL/HexB family.

Functionally, this protein is involved in the repair of mismatches in DNA. It is required for dam-dependent methyl-directed DNA mismatch repair. May act as a 'molecular matchmaker', a protein that promotes the formation of a stable complex between two or more DNA-binding proteins in an ATP-dependent manner without itself being part of a final effector complex. The chain is DNA mismatch repair protein MutL from Rhodopseudomonas palustris (strain TIE-1).